Consider the following 279-residue polypeptide: Shikimate dehydrogenase (NADP(+)) (279 aa).

Shikimate-binding positions include 17 to 19 and Thr64; that span reads SLS. The Proton acceptor role is filled by Lys68. Asp80 is a binding site for NADP(+). The shikimate site is built by Asn89 and Asp105. NADP(+) contacts are provided by residues 129-133, 153-158, and Leu221; these read GAGGS and NRTAKK. A shikimate-binding site is contributed by Tyr223. Gly245 contributes to the NADP(+) binding site.

This sequence belongs to the shikimate dehydrogenase family. As to quaternary structure, homodimer.

It carries out the reaction shikimate + NADP(+) = 3-dehydroshikimate + NADPH + H(+). It participates in metabolic intermediate biosynthesis; chorismate biosynthesis; chorismate from D-erythrose 4-phosphate and phosphoenolpyruvate: step 4/7. Functionally, involved in the biosynthesis of the chorismate, which leads to the biosynthesis of aromatic amino acids. Catalyzes the reversible NADPH linked reduction of 3-dehydroshikimate (DHSA) to yield shikimate (SA). This is Shikimate dehydrogenase (NADP(+)) from Idiomarina loihiensis (strain ATCC BAA-735 / DSM 15497 / L2-TR).